The sequence spans 101 residues: Urease subunit beta (101 aa).

The protein belongs to the urease beta subunit family. In terms of assembly, heterotrimer of UreA (gamma), UreB (beta) and UreC (alpha) subunits. Three heterotrimers associate to form the active enzyme.

The protein resides in the cytoplasm. It catalyses the reaction urea + 2 H2O + H(+) = hydrogencarbonate + 2 NH4(+). It functions in the pathway nitrogen metabolism; urea degradation; CO(2) and NH(3) from urea (urease route): step 1/1. This chain is Urease subunit beta, found in Ruegeria pomeroyi (strain ATCC 700808 / DSM 15171 / DSS-3) (Silicibacter pomeroyi).